We begin with the raw amino-acid sequence, 381 residues long: Putative acetyl-CoA C-acetyltransferase VraB (381 aa).

Cys86 acts as the Acyl-thioester intermediate in catalysis. His338 (proton acceptor) is an active-site residue.

The protein belongs to the thiolase-like superfamily. Thiolase family.

This is Putative acetyl-CoA C-acetyltransferase VraB (vraB) from Staphylococcus haemolyticus (strain JCSC1435).